A 282-amino-acid chain; its full sequence is Bis(5'-nucleosyl)-tetraphosphatase, symmetrical (282 aa).

It belongs to the Ap4A hydrolase family.

It carries out the reaction P(1),P(4)-bis(5'-adenosyl) tetraphosphate + H2O = 2 ADP + 2 H(+). In terms of biological role, hydrolyzes diadenosine 5',5'''-P1,P4-tetraphosphate to yield ADP. The chain is Bis(5'-nucleosyl)-tetraphosphatase, symmetrical from Burkholderia pseudomallei (strain 668).